Consider the following 375-residue polypeptide: Beta sliding clamp (375 aa).

This sequence belongs to the beta sliding clamp family. In terms of assembly, forms a ring-shaped head-to-tail homodimer around DNA which binds and tethers DNA polymerases and other proteins to the DNA. The DNA replisome complex has a single clamp-loading complex (3 tau and 1 each of delta, delta', psi and chi subunits) which binds 3 Pol III cores (1 core on the leading strand and 2 on the lagging strand) each with a beta sliding clamp dimer. Additional proteins in the replisome are other copies of gamma, psi and chi, Ssb, DNA helicase and RNA primase.

The protein localises to the cytoplasm. In terms of biological role, confers DNA tethering and processivity to DNA polymerases and other proteins. Acts as a clamp, forming a ring around DNA (a reaction catalyzed by the clamp-loading complex) which diffuses in an ATP-independent manner freely and bidirectionally along dsDNA. Initially characterized for its ability to contact the catalytic subunit of DNA polymerase III (Pol III), a complex, multichain enzyme responsible for most of the replicative synthesis in bacteria; Pol III exhibits 3'-5' exonuclease proofreading activity. The beta chain is required for initiation of replication as well as for processivity of DNA replication. This is Beta sliding clamp (dnaN) from Synechococcus elongatus (strain ATCC 33912 / PCC 7942 / FACHB-805) (Anacystis nidulans R2).